Reading from the N-terminus, the 374-residue chain is MKAFDKEELTIIRKFEHIEHCLKRNVQAHVSNGFEDVHFVHMSLPEIDKDEIDLSVEFLGRKFDYPIMIAGMTGGTKGSQLAGKINKTLAKAAQELNIPMGVGSQRAMIRKPETWESYYVRDVAPDVFLVGNLGAPQFAETMPDRYGIEEALKAVETIQADALAIHMNPLQESVQPEGDTQYRGVLKALAELKAEFPYPIIAKETGAGVSMEVAIRLESIGIDAIDVGGLGGTSWSGVEYYRAKDELGRNLALKFWDWGIKTAISVAEVRYATELPIIATGGMRDGIAMAKALAMGATFAGVALPLLRPAVKGDVEGVIKVLERYIEEIRNTMFLVGARNVEELRKVPLVITGFTREWLEQRIDLPVYLRDRRI.

Residue 13 to 14 (RK) participates in substrate binding. FMN-binding positions include 71–73 (GMT), S104, and N132. Residue 104-106 (SQR) participates in substrate binding. Q171 serves as a coordination point for substrate. E172 serves as a coordination point for Mg(2+). FMN is bound by residues K203, T233, 282-284 (GMR), and 303-304 (AL).

The protein belongs to the IPP isomerase type 2 family. Homooctamer. Dimer of tetramers. The cofactor is FMN. Requires NADPH as cofactor. Mg(2+) serves as cofactor.

It localises to the cytoplasm. The catalysed reaction is isopentenyl diphosphate = dimethylallyl diphosphate. Involved in the biosynthesis of isoprenoids. Catalyzes the 1,3-allylic rearrangement of the homoallylic substrate isopentenyl (IPP) to its allylic isomer, dimethylallyl diphosphate (DMAPP). This is Isopentenyl-diphosphate delta-isomerase from Thermococcus onnurineus (strain NA1).